The chain runs to 156 residues: Small ribosomal subunit protein uS7 (156 aa).

It belongs to the universal ribosomal protein uS7 family. As to quaternary structure, part of the 30S ribosomal subunit. Contacts proteins S9 and S11.

Functionally, one of the primary rRNA binding proteins, it binds directly to 16S rRNA where it nucleates assembly of the head domain of the 30S subunit. Is located at the subunit interface close to the decoding center, probably blocks exit of the E-site tRNA. This Latilactobacillus sakei subsp. sakei (strain 23K) (Lactobacillus sakei subsp. sakei) protein is Small ribosomal subunit protein uS7.